A 159-amino-acid chain; its full sequence is Small ribosomal subunit protein uS7m (159 aa).

This sequence belongs to the universal ribosomal protein uS7 family. Part of the small ribosomal subunit.

The protein resides in the mitochondrion. Functionally, one of the primary rRNA binding proteins, it binds directly to the small rRNA where it nucleates assembly of the head domain of the small subunit. The protein is Small ribosomal subunit protein uS7m (RPS7) of Reclinomonas americana.